Here is a 114-residue protein sequence, read N- to C-terminus: T cell receptor alpha variable 24 (114 aa).

Residues 1–22 form the signal peptide; that stretch reads MEKNPLAAPLLILWFHLDCVSS. In terms of domain architecture, Ig-like spans 23–114; sequence ILNVEQSPQS…EDSATYLCAF (92 aa). The N-linked (GlcNAc...) asparagine glycan is linked to Asn42. Residues Cys45 and Cys112 are joined by a disulfide bond.

Alpha-beta TR is a heterodimer composed of an alpha and beta chain; disulfide-linked. The alpha-beta TR is associated with the transmembrane signaling CD3 coreceptor proteins to form the TR-CD3 (TcR or TCR). The assembly of alpha-beta TR heterodimers with CD3 occurs in the endoplasmic reticulum where a single alpha-beta TR heterodimer associates with one CD3D-CD3E heterodimer, one CD3G-CD3E heterodimer and one CD247 homodimer forming a stable octameric structure. CD3D-CD3E and CD3G-CD3E heterodimers preferentially associate with TR alpha and TR beta chains, respectively. The association of the CD247 homodimer is the last step of TcR assembly in the endoplasmic reticulum and is required for transport to the cell surface.

The protein localises to the cell membrane. V region of the variable domain of T cell receptor (TR) alpha chain that participates in the antigen recognition. Alpha-beta T cell receptors are antigen specific receptors which are essential to the immune response and are present on the cell surface of T lymphocytes. Recognize peptide-major histocompatibility (MH) (pMH) complexes that are displayed by antigen presenting cells (APC), a prerequisite for efficient T cell adaptive immunity against pathogens. Binding of alpha-beta TR to pMH complex initiates TR-CD3 clustering on the cell surface and intracellular activation of LCK that phosphorylates the ITAM motifs of CD3G, CD3D, CD3E and CD247 enabling the recruitment of ZAP70. In turn ZAP70 phosphorylates LAT, which recruits numerous signaling molecules to form the LAT signalosome. The LAT signalosome propagates signal branching to three major signaling pathways, the calcium, the mitogen-activated protein kinase (MAPK) kinase and the nuclear factor NF-kappa-B (NF-kB) pathways, leading to the mobilization of transcription factors that are critical for gene expression and essential for T cell growth and differentiation. The T cell repertoire is generated in the thymus, by V-(D)-J rearrangement. This repertoire is then shaped by intrathymic selection events to generate a peripheral T cell pool of self-MH restricted, non-autoaggressive T cells. Post-thymic interaction of alpha-beta TR with the pMH complexes shapes TR structural and functional avidity. In Homo sapiens (Human), this protein is T cell receptor alpha variable 24.